The primary structure comprises 238 residues: NADH-quinone oxidoreductase subunit C (238 aa).

Residues 1–20 (MSSPDQNPSDAAGQTGSSNE) are disordered.

Belongs to the complex I 30 kDa subunit family. NDH-1 is composed of 14 different subunits. Subunits NuoB, C, D, E, F, and G constitute the peripheral sector of the complex.

Its subcellular location is the cell membrane. The enzyme catalyses a quinone + NADH + 5 H(+)(in) = a quinol + NAD(+) + 4 H(+)(out). Functionally, NDH-1 shuttles electrons from NADH, via FMN and iron-sulfur (Fe-S) centers, to quinones in the respiratory chain. The immediate electron acceptor for the enzyme in this species is believed to be a menaquinone. Couples the redox reaction to proton translocation (for every two electrons transferred, four hydrogen ions are translocated across the cytoplasmic membrane), and thus conserves the redox energy in a proton gradient. The protein is NADH-quinone oxidoreductase subunit C of Mycobacterium marinum (strain ATCC BAA-535 / M).